The sequence spans 291 residues: 33 kDa chaperonin (291 aa).

2 cysteine pairs are disulfide-bonded: Cys237-Cys239 and Cys270-Cys273.

It belongs to the HSP33 family. In terms of processing, under oxidizing conditions two disulfide bonds are formed involving the reactive cysteines. Under reducing conditions zinc is bound to the reactive cysteines and the protein is inactive.

The protein localises to the cytoplasm. In terms of biological role, redox regulated molecular chaperone. Protects both thermally unfolding and oxidatively damaged proteins from irreversible aggregation. Plays an important role in the bacterial defense system toward oxidative stress. This chain is 33 kDa chaperonin, found in Bacillus cytotoxicus (strain DSM 22905 / CIP 110041 / 391-98 / NVH 391-98).